A 760-amino-acid polypeptide reads, in one-letter code: uncharacterized protein (760 aa).

The first 23 residues, 1–23 (MVIKKGFFALSSCTLGLGLILTA), serve as a signal peptide directing secretion. C24 is lipidated: N-palmitoyl cysteine. C24 is lipidated: S-diacylglycerol cysteine. Disordered stretches follow at residues 220-262 (ANGK…NSDN) and 443-482 (YEIK…NQTS). 2 stretches are compositionally biased toward polar residues: residues 222–257 (GKTT…SQDA) and 448–472 (PTNS…GKEQ).

It belongs to the MG185/MG260 family.

It is found in the cell membrane. This is an uncharacterized protein from Mycoplasma pneumoniae (strain ATCC 29342 / M129 / Subtype 1) (Mycoplasmoides pneumoniae).